Reading from the N-terminus, the 241-residue chain is Probable transcriptional regulatory protein Reut_A2522 (241 aa).

The protein belongs to the TACO1 family.

The protein localises to the cytoplasm. This is Probable transcriptional regulatory protein Reut_A2522 from Cupriavidus pinatubonensis (strain JMP 134 / LMG 1197) (Cupriavidus necator (strain JMP 134)).